The following is a 255-amino-acid chain: Probable transcriptional regulatory protein CMM_1817 (255 aa).

It belongs to the TACO1 family.

It is found in the cytoplasm. The sequence is that of Probable transcriptional regulatory protein CMM_1817 from Clavibacter michiganensis subsp. michiganensis (strain NCPPB 382).